Consider the following 1176-residue polypeptide: Translation initiation factor IF-2 (1176 aa).

Low complexity-rich tracts occupy residues 32-44, 57-79, 94-166, and 193-235; these read IAAK…ISDS, ASPS…AGKS, APVA…AAPS, and KPTP…VKPT. Disordered regions lie at residues 32–502 and 535–567; these read IAAK…QRQK and RPAK…RQRR. Pro residues predominate over residues 251 to 270; the sequence is APPPASTPRPAPSRPTPRPA. Low complexity-rich tracts occupy residues 388 to 409 and 439 to 469; these read GRPG…GGMR and NRPT…FRPG. Over residues 478–492 the composition is skewed to basic and acidic residues; that stretch reads GRPDWDDSAKLEALR. Residues 553 to 567 are compositionally biased toward basic residues; that stretch reads VRKRRKETARQRQRR. The 173-residue stretch at 668–840 folds into the tr-type G domain; it reads RRPPVVTVMG…LLLVTEVEDL (173 aa). The segment at 677–684 is G1; the sequence is GHVDHGKT. 677-684 contacts GTP; it reads GHVDHGKT. Residues 702-706 are G2; the sequence is GITQH. The segment at 727–730 is G3; that stretch reads DTPG. Residues 727 to 731 and 781 to 784 contribute to the GTP site; these read DTPGH and NKID. Positions 781–784 are G4; it reads NKID. Residues 817 to 819 form a G5 region; it reads SAI.

Belongs to the TRAFAC class translation factor GTPase superfamily. Classic translation factor GTPase family. IF-2 subfamily.

It localises to the cytoplasm. One of the essential components for the initiation of protein synthesis. Protects formylmethionyl-tRNA from spontaneous hydrolysis and promotes its binding to the 30S ribosomal subunits. Also involved in the hydrolysis of GTP during the formation of the 70S ribosomal complex. In Synechococcus sp. (strain CC9902), this protein is Translation initiation factor IF-2.